Consider the following 72-residue polypeptide: Translation initiation factor IF-1 (72 aa).

Residues 1–72 (MAKEDSIEME…SKGRIVYRAR (72 aa)) enclose the S1-like domain.

This sequence belongs to the IF-1 family. In terms of assembly, component of the 30S ribosomal translation pre-initiation complex which assembles on the 30S ribosome in the order IF-2 and IF-3, IF-1 and N-formylmethionyl-tRNA(fMet); mRNA recruitment can occur at any time during PIC assembly.

It is found in the cytoplasm. Its function is as follows. One of the essential components for the initiation of protein synthesis. Stabilizes the binding of IF-2 and IF-3 on the 30S subunit to which N-formylmethionyl-tRNA(fMet) subsequently binds. Helps modulate mRNA selection, yielding the 30S pre-initiation complex (PIC). Upon addition of the 50S ribosomal subunit IF-1, IF-2 and IF-3 are released leaving the mature 70S translation initiation complex. The sequence is that of Translation initiation factor IF-1 from Nitrosococcus oceani (strain ATCC 19707 / BCRC 17464 / JCM 30415 / NCIMB 11848 / C-107).